Reading from the N-terminus, the 441-residue chain is UPF0761 membrane protein RSc1559 (441 aa).

The next 6 helical transmembrane spans lie at 44 to 64 (VLSL…FPMF), 101 to 121 (GLTA…MLTV), 141 to 161 (VLVF…SLSV), 182 to 202 (VVVG…LYVF), 207 to 227 (LVAW…FEIA), and 248 to 268 (FAAL…TLLG).

This sequence belongs to the UPF0761 family.

It localises to the cell inner membrane. This is UPF0761 membrane protein RSc1559 from Ralstonia nicotianae (strain ATCC BAA-1114 / GMI1000) (Ralstonia solanacearum).